A 162-amino-acid chain; its full sequence is MRNITNFLKTFLLWELLKGLKVTGKHFFTRKVTVQYPDEKTPISNRFRGLHALRRYENGEERCIACKLCEVVCPALAITINSTEREDGTRRTSSYEIDLFKCIFCGYCEESCPVDSIVETNILEYHFEERGENIMTKAKLLAIGDKYEAQIAADRLQDKDFR.

4Fe-4S ferredoxin-type domains follow at residues 54 to 83 (RRYE…INST) and 93 to 122 (SSYE…ETNI). 8 residues coordinate [4Fe-4S] cluster: cysteine 63, cysteine 66, cysteine 69, cysteine 73, cysteine 102, cysteine 105, cysteine 108, and cysteine 112.

Belongs to the complex I 23 kDa subunit family. In terms of assembly, NDH-1 is composed of 14 different subunits. Subunits NuoA, H, J, K, L, M, N constitute the membrane sector of the complex. It depends on [4Fe-4S] cluster as a cofactor.

It localises to the cell inner membrane. It catalyses the reaction a quinone + NADH + 5 H(+)(in) = a quinol + NAD(+) + 4 H(+)(out). Functionally, NDH-1 shuttles electrons from NADH, via FMN and iron-sulfur (Fe-S) centers, to quinones in the respiratory chain. The immediate electron acceptor for the enzyme in this species is believed to be ubiquinone. Couples the redox reaction to proton translocation (for every two electrons transferred, four hydrogen ions are translocated across the cytoplasmic membrane), and thus conserves the redox energy in a proton gradient. In Francisella tularensis subsp. holarctica (strain FTNF002-00 / FTA), this protein is NADH-quinone oxidoreductase subunit I.